The following is a 664-amino-acid chain: MELHGEEQPPPPQEPWGRLLRLGAEEDEPQILLWKREWTIGRRRGCDLSFPSNKLVSGDHCKLTVDEISGEVTLEDTSTNGTVINKLQVVKKQTYPLQSGDIIYLVYRKNEPEHNVAYLYESLSGKQSLTQDSLEANKENMFHVTKDCSGPGQGDDPQVPLLSPMAQTCLEEPQPSTSTSDLLPTASTSSTEPELTSAGQKHSSSSGPGNTSISPKGRSSLVANGELSSLSPVFQDKEASFSLLESKDHEELEPAKKKMKGDGELDTNLQLLVSGQRGNAQTSSEDVKDASVKPDKMEETLTCIICQDLLHDCVSLQPCMHTFCAACYSGWMERSSLCPTCRCPVERICKNHILNNLVEAYLIQHPDKSRSEEDVRSMDARNKITQDMLQPKVRRSFSDEEGSSEDLLELSDVDSESSDISQPYIVCRQCPEYRRQAVQSLPCPVPESELGATLALGGEAPSTSASLPTAAPDYMCPLQGSHAICTCCFQPMPDRRAEREQDPRVAPQQCAVCLQPFCHLYWGCTRTGCFGCLAPFCELNLGDKCLDGVLNNNNYESDILKNYLATRGLTWKSVLTESLLALQRGVFMLSDYRITGNTVLCYCCGLRSFRELTYQYRQNIPASELPVTVTSRPDCYWGRNCRTQVKAHHAMKFNHICEQTRFKN.

Residues 38-89 (WTIGRRRGCDLSFPSNKLVSGDHCKLTVDEISGEVTLEDTSTNGTVINKLQV) enclose the FHA domain. Disordered stretches follow at residues 170–220 (LEEP…GRSS) and 245–264 (ESKD…GDGE). Positions 174–202 (QPSTSTSDLLPTASTSSTEPELTSAGQKH) are enriched in polar residues. The segment covering 203–215 (SSSSGPGNTSISP) has biased composition (low complexity). Over residues 245–263 (ESKDHEELEPAKKKMKGDG) the composition is skewed to basic and acidic residues. An RING-type zinc finger spans residues 303–342 (CIICQDLLHDCVSLQPCMHTFCAACYSGWMERSSLCPTCR). Threonine 385 bears the Phosphothreonine mark. The segment at 389–413 (LQPKVRRSFSDEEGSSEDLLELSDV) is disordered. Positions 399 to 413 (DEEGSSEDLLELSDV) are enriched in acidic residues. A PBZ-type zinc finger spans residues 633-655 (PDCYWGRNCRTQVKAHHAMKFNH).

The protein belongs to the CHFR family. In terms of assembly, interacts with HDAC1 and HDAC2. Interacts with PML (with sumoylated form of PML). Poly-ADP-ribosylated. In addition to binding non covalently poly(ADP-ribose) via its PBZ-type zinc finger, the protein is also covalently poly-ADP-ribosylated by PARP1. In terms of processing, autoubiquitinated; may regulate its cellular level. Post-translationally, phosphorylated by PKB. Phosphorylation may affect its E3 ligase activity.

It is found in the nucleus. Its subcellular location is the PML body. The enzyme catalyses S-ubiquitinyl-[E2 ubiquitin-conjugating enzyme]-L-cysteine + [acceptor protein]-L-lysine = [E2 ubiquitin-conjugating enzyme]-L-cysteine + N(6)-ubiquitinyl-[acceptor protein]-L-lysine.. It participates in protein modification; protein ubiquitination. In terms of biological role, E3 ubiquitin-protein ligase that functions in the antephase checkpoint by actively delaying passage into mitosis in response to microtubule poisons. Acts in early prophase before chromosome condensation, when the centrosome move apart from each other along the periphery of the nucleus. Probably involved in signaling the presence of mitotic stress caused by microtubule poisons by mediating the 'Lys-48'-linked ubiquitination of target proteins, leading to their degradation by the proteasome. Promotes the ubiquitination and subsequent degradation of AURKA and PLK1. Probably acts as a tumor suppressor, possibly by mediating the polyubiquitination of HDAC1, leading to its degradation. May also promote the formation of 'Lys-63'-linked polyubiquitin chains and functions with the specific ubiquitin-conjugating UBC13-MMS2 (UBE2N-UBE2V2) heterodimer. Substrates that are polyubiquitinated at 'Lys-63' are usually not targeted for degradation, but are rather involved in signaling cellular stress. The sequence is that of E3 ubiquitin-protein ligase CHFR (Chfr) from Mus musculus (Mouse).